Consider the following 699-residue polypeptide: TBC1 domain family member 23 (699 aa).

Residues 44 to 225 enclose the Rab-GAP TBC domain; that stretch reads PLPADLRAKV…AIWDGYLQQA (182 aa). Position 300 is a phosphoserine (Ser300). One can recognise a Rhodanese domain in the interval 334-446; sequence EGVRFFVVDC…LQQHLADINV (113 aa). Residues 459 to 479 show a composition bias toward polar residues; it reads STSGSRSSINSVDGESPNGSS. The tract at residues 459–483 is disordered; the sequence is STSGSRSSINSVDGESPNGSSDRGM. Phosphoserine is present on residues Ser469, Ser474, and Ser507. Phosphothreonine is present on Thr514. Positions 514–573 are may mediate the interaction with C17orf75, FAM91A1 and WDR11; that stretch reads TPVDRMSFNLPWPDRSCTERHVSSSDRVGKPYRGVKPVFSIGDEEEYDTDEIDSSSMSDD. Positions 514-699 are may mediate the interaction with WASHC1; that stretch reads TPVDRMSFNL…IMKVLDALES (186 aa). Ser520 and Ser571 each carry phosphoserine. The interval 574–699 is may mediate the interaction with FKBP15 and WASHC2; required for endosome to Golgi trafficking; that stretch reads DRKEVVNIQT…IMKVLDALES (126 aa).

Directly interacts with GOLGA1 and GOLGA4. Interacts with FAM91A1, C17ORF75 and WDR11; the interaction recruits TBC1D23 to AP-1-derived vesicles. Directly interacts with WASHC1 and WASHC2A/FAM21A. Interacts with FKBP15. In terms of tissue distribution, isoform 1: Widely expressed, including in fetal adult brain (corpus callosum, pons, cerebellum), spinal cord, heart, skeletal muscle, thymus and bone marrow, and at lower levels in spleen. Hardly detected in liver, kidney, colon and testis. Isoform 2: Expressed at high levels in liver, kidney, colon and testis. Hardly detected in tissues expressing high levels of isoform 1. Expressed at low levels in spleen.

The protein resides in the golgi apparatus. It localises to the trans-Golgi network. Its subcellular location is the cytoplasmic vesicle. Its function is as follows. Putative Rab GTPase-activating protein which plays a role in vesicular trafficking. Involved in endosome-to-Golgi trafficking. Acts as a bridging protein by binding simultaneously to golgins, including GOLGA1 and GOLGA4, located at the trans-Golgi, and to the WASH complex, located on endosome-derived vesicles. Together with WDR11 complex facilitates the golgin-mediated capture of vesicles generated using AP-1. Plays a role in brain development, including in cortical neuron positioning. May also be important for neurite outgrowth, possibly through its involvement in membrane trafficking and cargo delivery, 2 processes that are essential for axonal and dendritic growth. May act as a general inhibitor of innate immunity signaling, strongly inhibiting multiple TLR and dectin/CLEC7A-signaling pathways. Does not alter initial activation events, but instead affects maintenance of inflammatory gene expression several hours after bacterial lipopolysaccharide (LPS) challenge. The polypeptide is TBC1 domain family member 23 (TBC1D23) (Homo sapiens (Human)).